A 1434-amino-acid chain; its full sequence is MDQEVMDFFDFSKELNRVPGAPQGYISSDPWLMATESKSSEVPNRETIGTDYVTKIVAKEKCRLNRTLLEYQPQGKRNRTLDDLDTDDEAEETEIRRDDEYYKKFRFNLNRDKNLSIYAKREEILAAINAHPVIIIKGETGCGKTTQVPQYILDEAYKSGKYCNIVVTQPRRIAAISIANRVCQEREWQQNTVCSFQVGLHRPNSLEDTRLLYCTTGVLLNNLINNKTLTHYTHIVLDEVHERDQNMDFLLIVVRRLLATNSRHVKIILMSATIDAKELSDYFATTNSIPPVITTNHGRKHSIEKFYRDQLGSIIWNEEDVGDQHVPEINKHGYRAAVKIIVIIDNMERKAAIQSRLSYDETLRYGAVLIFLPGIYEIDTMAENITCMLENDRNIKVLIVRCFSLMTPENQRDVFNPPPPGFRKIILATNIAESSITVPDVSYVIDFCLTKVKVTDTASSFSSLRLTWASKANCRQRAGRVGRLRSGRVYRMVNKHFYQREMAEFGIPEMLRLPLQNSVLKAKVLNMGSPMEILALALSPPNLSDIQNTILLLKEVGALYLTVDGVYDALDGDLTYWGTIMARLPLDTRQSRLIILGYIFNMLEEAIIIAAGLSTNGLFAHDGGRTQLGDSFWMHYIFADGSGSDLVAIWRVYLTYLSLVEIGHDQESAIRWAKRFHVSLRSLKEIHLLVQELRVRCMHLGLIPFSVNPSQMMDDREKAIMLKVIIAGAFYPNYFTRSKDTCADTDRNIYQTISGHDPCRTVYFTNFKPAYMGELYTRRIKELFQEVRIPPENMDVTFQEGSQKVFVTFKQDDWIADSSKFVPVSGRVQSEVYKAVMMRQNRLERPIHIMNPSAFMSYVQQRGIGDVIEGRWIPPTKPLNVELLALPSVFDKTISGLITCIVSCGKFFFQPQSFAECIGNMSEIFNAPQQLRNYVNNAGDITKGMMVLAKRDSYFQRATVIRPENQSNRQPMFYVRFIDYGDCALLSMQQMRLMPRELTEQYGDLPPRVFECRLAMVQPSSMVSGNNRWSTAANDMLRSVAKSGLIDIEVYSLFNNVAAVLIYMRDGIINDKLVELMLCRRSDEDYMSRKDHDFRLRRQESARYLSSAQRQQINEEYMRSCQLPEDHDLRPPPPEKCKTVVILKGPYSPLECTMQCITRVGSSKRVNIDHLSVNALLLDADPQDHHDHLIVAHEIAENRNGHTLTARGTTLMPNVQGFGALMVMLFSPTMQLKCNREGTSYVSVLGGLGCDPETNEPYFPEHDVLINLDVNILEDDVILINQIRYYIDSVFFNFKDENNPAVSANERVSIYTQLRSIINRLLCKDRRYIERNMSNADFEWETHPDLPPPNEPFGKRAIFPMHSLTELQEEDTGRLVQLRENCSMLHKWRNVEGTLPHMTCKLCNQLLDSVPQLRLHLLTILHRDREKQIDYCNQ.

Positions 125–292 (LAAINAHPVI…FATTNSIPPV (168 aa)) constitute a Helicase ATP-binding domain. An ATP-binding site is contributed by 138-145 (GETGCGKT). Residues 238-241 (DEVH) carry the DEAH box motif. A Helicase C-terminal domain is found at 339–526 (KIIVIIDNME…NSVLKAKVLN (188 aa)). The Tudor domain maps to 938–1001 (AGDITKGMMV…RLMPRELTEQ (64 aa)).

This sequence belongs to the DEAD box helicase family. DEAH subfamily.

Its subcellular location is the cytoplasm. It catalyses the reaction ATP + H2O = ADP + phosphate + H(+). Probable ATP-binding RNA helicase which plays a central role during spermatogenesis and oogenesis by repressing transposable elements and preventing their mobilization, which is essential for the germline integrity. Acts via the piRNA metabolic process, which mediates the repression of transposable elements during meiosis by forming complexes composed of piRNAs and Piwi and govern the methylation and subsequent repression of transposons. Involved in the repression of LTR retrotransposon copia. Also involved in telomere regulation by repressing specialized telomeric retroelements HeT-A, TAHRE, and TART; Drosophila telomeres being maintained by transposition of specialized telomeric retroelements. Involved in telomeric trans-silencing, a repression mechanism by which a transposon or a transgene inserted in subtelomeric heterochromatin has the capacity to repress in trans in the female germline, a homologous transposon, or transgene located in euchromatin. Involved in the repression of testis-expressed Stellate genes by the homologous Su(Ste) repeats. Required for anteroposterior and dorsoventral axis formation during oogenesis. The sequence is that of Probable ATP-dependent RNA helicase spindle-E (spn-E) from Drosophila sechellia (Fruit fly).